The primary structure comprises 56 residues: Ovomucoid (56 aa).

Residues 6-56 (VDCSEYPKPECTAEERPICGSDNKTYGNKCNFCNAVVESNGTLTLRNFGKC) enclose the Kazal-like domain. Intrachain disulfides connect Cys8–Cys38, Cys16–Cys35, and Cys24–Cys56. Asn45 carries N-linked (GlcNAc...) asparagine glycosylation.

The protein resides in the secreted. The chain is Ovomucoid from Bambusicola thoracicus (Chinese bamboo-partridge).